We begin with the raw amino-acid sequence, 94 residues long: Acylphosphatase (94 aa).

One can recognise an Acylphosphatase-like domain in the interval 5-94 (RLTAFVHGHV…PRDVEGFVER (90 aa)). Catalysis depends on residues arginine 20 and asparagine 38.

Belongs to the acylphosphatase family.

The catalysed reaction is an acyl phosphate + H2O = a carboxylate + phosphate + H(+). The polypeptide is Acylphosphatase (acyP) (Corynebacterium glutamicum (strain ATCC 13032 / DSM 20300 / JCM 1318 / BCRC 11384 / CCUG 27702 / LMG 3730 / NBRC 12168 / NCIMB 10025 / NRRL B-2784 / 534)).